Consider the following 261-residue polypeptide: Polycomb group RING finger protein 1 (261 aa).

The RING-type zinc-finger motif lies at cysteine 45 to asparagine 84.

As to quaternary structure, component of a PRC1-like complex.

The protein localises to the nucleus. Its function is as follows. Component of a Polycomb group (PcG) multiprotein PRC1-like complex, a complex class required to maintain the transcriptionally repressive state of many genes, including Hox genes, throughout development. PcG PRC1 complex acts via chromatin remodeling and modification of histones; it mediates monoubiquitination of histone H2A 'Lys-119', rendering chromatin heritably changed in its expressibility. This chain is Polycomb group RING finger protein 1 (pcgf1), found in Danio rerio (Zebrafish).